Reading from the N-terminus, the 656-residue chain is Broad substrate specificity ATP-binding cassette transporter ABCG2 (656 aa).

Positions 1–25 are disordered; it reads MSSNSYQVSIPMSKRNTNGLPGSSS. At 1 to 394 the chain is on the cytoplasmic side; it reads MSSNSYQVSI…SFKNLLGNPQ (394 aa). Positions 37-286 constitute an ABC transporter domain; it reads LSFHDICYRV…FASIGYNCEP (250 aa). ATP contacts are provided by residues 80-87, 184-190, Glu211, and His243; these read GPTGGGKS and RGVSGGE. Positions 390 to 652 constitute an ABC transmembrane type-2 domain; sequence LGNPQASVAQ…TIAYLKLLLL (263 aa). A helical membrane pass occupies residues 395 to 415; the sequence is ASVAQIIVTIILGLVIGAIFY. At 416–429 the chain is on the extracellular side; it reads DLKNDPSGIQNRAG. The chain crosses the membrane as a helical span at residues 430–450; sequence VLFFLTTNQCFSSVSAVELLV. The Cytoplasmic portion of the chain corresponds to 451–478; it reads VEKKLFIHEYISGYYRVSSYFFGKLLSD. The chain crosses the membrane as a helical span at residues 479–498; it reads LLPMRMLPSIIFTCITYFLL. Residues 499-507 lie on the Extracellular side of the membrane; sequence GLKPAVGSF. A helical membrane pass occupies residues 508-530; it reads FIMMFTLMMVAYSASSMALAIAA. At 531 to 536 the chain is on the cytoplasmic side; that stretch reads GQSVVS. The helical transmembrane segment at 537-557 threads the bilayer; it reads VATLLMTISFVFMMIFSGLLV. Residues 558-631 lie on the Extracellular side of the membrane; the sequence is NLKTVVPWLS…LSAWGLWQNH (74 aa). Cys593 and Cys609 form a disulfide bridge. 2 N-linked (GlcNAc...) asparagine glycosylation sites follow: Asn597 and Asn601. Residues 632-652 form a helical membrane-spanning segment; the sequence is VALACMMVIFLTIAYLKLLLL. At 653 to 656 the chain is on the cytoplasmic side; the sequence is KKYS.

The protein belongs to the ABC transporter superfamily. ABCG family. Eye pigment precursor importer (TC 3.A.1.204) subfamily. In terms of assembly, homodimer; disulfide-linked. The minimal functional unit is a homodimer, but the major oligomeric form in plasma membrane is a homotetramer with possibility of higher order oligomerization up to homododecamers. In terms of processing, N-glycosylated. Glycosylation-deficient ABCG2 is normally expressed and functional. Phosphorylated. Phosphorylation may regulate the localization to the plasma membrane, the homooligomerization and therefore, the activity of the transporter. In terms of tissue distribution, high expression in brain, kidney and lung. Also expressed in livere, colon, small intestine, heart, skeletal muscle, spleen, stomach and pancreas.

It is found in the cell membrane. Its subcellular location is the apical cell membrane. The protein resides in the mitochondrion membrane. It carries out the reaction ATP + H2O + xenobioticSide 1 = ADP + phosphate + xenobioticSide 2.. It catalyses the reaction urate(in) + ATP + H2O = urate(out) + ADP + phosphate + H(+). The catalysed reaction is indoxyl sulfate(in) + ATP + H2O = indoxyl sulfate(out) + ADP + phosphate + H(+). The enzyme catalyses sphing-4-enine 1-phosphate(in) + ATP + H2O = sphing-4-enine 1-phosphate(out) + ADP + phosphate + H(+). It carries out the reaction estrone 3-sulfate(in) + ATP + H2O = estrone 3-sulfate(out) + ADP + phosphate + H(+). It catalyses the reaction dehydroepiandrosterone 3-sulfate(in) + ATP + H2O = dehydroepiandrosterone 3-sulfate(out) + ADP + phosphate + H(+). The catalysed reaction is 4-methylumbelliferone sulfate(in) + ATP + H2O = 4-methylumbelliferone sulfate(out) + ADP + phosphate + H(+). The enzyme catalyses 5,7-dimethyl-2-methylamino-4-(3-pyridylmethyl)-1,3-benzothiazol-6-yl beta-D-glucuronate(in) + ATP + H2O = 5,7-dimethyl-2-methylamino-4-(3-pyridylmethyl)-1,3-benzothiazol-6-yl beta-D-glucuronate(out) + ADP + phosphate + H(+). It carries out the reaction 4-methylumbelliferone beta-D-glucuronate(in) + ATP + H2O = 4-methylumbelliferone beta-D-glucuronate(out) + ADP + phosphate + H(+). It catalyses the reaction 5,7-dimethyl-2-methylamino-4-(3-pyridylmethyl)-1,3-benzothiazol-6-yl sulfate(in) + ATP + H2O = 5,7-dimethyl-2-methylamino-4-(3-pyridylmethyl)-1,3-benzothiazol-6-yl sulfate(out) + ADP + phosphate + H(+). The catalysed reaction is 17beta-estradiol 17-O-(beta-D-glucuronate)(in) + ATP + H2O = 17beta-estradiol 17-O-(beta-D-glucuronate)(out) + ADP + phosphate + H(+). The enzyme catalyses methotrexate(in) + ATP + H2O = methotrexate(out) + ADP + phosphate + H(+). It carries out the reaction riboflavin(in) + ATP + H2O = riboflavin(out) + ADP + phosphate + H(+). It catalyses the reaction pheophorbide a(in) + ATP + H2O = pheophorbide a(out) + ADP + phosphate + H(+). The catalysed reaction is itaconate(in) + ATP + H2O = itaconate(out) + ADP + phosphate + H(+). Its function is as follows. Broad substrate specificity ATP-dependent transporter of the ATP-binding cassette (ABC) family that actively extrudes a wide variety of physiological compounds, dietary toxins and xenobiotics from cells. Involved in porphyrin homeostasis, mediating the export of protoporphyrin IX (PPIX) from both mitochondria to cytosol and cytosol to extracellular space, it also functions in the cellular export of heme. Also mediates the efflux of sphingosine-1-P from cells. Acts as a urate exporter functioning in both renal and extrarenal urate excretion. In kidney, it also functions as a physiological exporter of the uremic toxin indoxyl sulfate. Also involved in the excretion of steroids like estrone 3-sulfate/E1S, 3beta-sulfooxy-androst-5-en-17-one/DHEAS, and other sulfate conjugates. Mediates the secretion of the riboflavin and biotin vitamins into milk. Extrudes pheophorbide a, a phototoxic porphyrin catabolite of chlorophyll, reducing its bioavailability. Plays an important role in the exclusion of xenobiotics from the brain. It confers to cells a resistance to multiple drugs and other xenobiotics including mitoxantrone, pheophorbide, camptothecin, methotrexate, azidothymidine, and the anthracyclines daunorubicin and doxorubicin, through the control of their efflux. In placenta, it limits the penetration of drugs from the maternal plasma into the fetus. May play a role in early stem cell self-renewal by blocking differentiation. In inflammatory macrophages, exports itaconate from the cytosol to the extracellular compartment and limits the activation of TFEB-dependent lysosome biogenesis involved in antibacterial innate immune response. This Sus scrofa (Pig) protein is Broad substrate specificity ATP-binding cassette transporter ABCG2 (ABCG2).